The following is a 393-amino-acid chain: STE20-related kinase adapter protein alpha (393 aa).

Phosphoserine is present on residues Ser2 and Ser9. One can recognise a Protein kinase domain in the interval Tyr32–Phe341. Thr381 is subject to Phosphothreonine; by LKB1.

The protein belongs to the protein kinase superfamily. STE Ser/Thr protein kinase family. STE20 subfamily. In terms of assembly, component of a trimeric complex composed of STK11/LKB1, STRAD (STRADA or STRADB) and CAB39/MO25 (CAB39/MO25alpha or CAB39L/MO25beta): the complex tethers STK11/LKB1 in the cytoplasm and stimulates its catalytic activity. Expressed in liver.

Its subcellular location is the nucleus. It localises to the cytoplasm. Pseudokinase which, in complex with CAB39/MO25 (CAB39/MO25alpha or CAB39L/MO25beta), binds to and activates STK11/LKB1. Adopts a closed conformation typical of active protein kinases and binds STK11/LKB1 as a pseudosubstrate, promoting conformational change of STK11/LKB1 in an active conformation. This chain is STE20-related kinase adapter protein alpha (Strada), found in Rattus norvegicus (Rat).